The primary structure comprises 200 residues: Recombination protein RecR (200 aa).

A C4-type zinc finger spans residues 60–75 (CVYCQALTEDDVCNIC). Positions 83 to 177 (TKLCIIESML…KISRIGFGVP (95 aa)) constitute a Toprim domain.

Belongs to the RecR family.

Functionally, may play a role in DNA repair. It seems to be involved in an RecBC-independent recombinational process of DNA repair. It may act with RecF and RecO. The polypeptide is Recombination protein RecR (Francisella tularensis subsp. mediasiatica (strain FSC147)).